A 975-amino-acid chain; its full sequence is Monofunctional C1-tetrahydrofolate synthase, mitochondrial (975 aa).

The N-terminal 30 residues, 1 to 30 (MSARLPFVLRRLARPQHPGSPRRLPSLCRA), are a transit peptide targeting the mitochondrion. The interval 13–45 (ARPQHPGSPRRLPSLCRASSGRGSGCGGGEGLL) is disordered. The tract at residues 31-345 (SSGRGSGCGG…REQQHRRWRL (315 aa)) is methylenetetrahydrofolate dehydrogenase and cyclohydrolase. Residues 34–44 (RGSGCGGGEGL) show a composition bias toward gly residues. The residue at position 187 (Lys-187) is an N6-acetyllysine; alternate. Residue Lys-187 is modified to N6-succinyllysine; alternate. The tract at residues 346–975 (HCLKLQPLSP…TETEQVKGLF (630 aa)) is formyltetrahydrofolate synthetase. Ser-354 bears the Phosphoserine mark. 420-427 (TPLGEGKS) serves as a coordination point for ATP. Lys-593 bears the N6-succinyllysine mark.

This sequence in the N-terminal section; belongs to the tetrahydrofolate dehydrogenase/cyclohydrolase family. In the C-terminal section; belongs to the formate--tetrahydrofolate ligase family. In terms of assembly, homodimer.

It is found in the mitochondrion. The enzyme catalyses (6S)-5,6,7,8-tetrahydrofolate + formate + ATP = (6R)-10-formyltetrahydrofolate + ADP + phosphate. It functions in the pathway one-carbon metabolism; tetrahydrofolate interconversion. Its function is as follows. May provide the missing metabolic reaction required to link the mitochondria and the cytoplasm in the mammalian model of one-carbon folate metabolism complementing thus the enzymatic activities of MTHFD2. The polypeptide is Monofunctional C1-tetrahydrofolate synthase, mitochondrial (MTHFD1L) (Bos taurus (Bovine)).